The following is a 186-amino-acid chain: ATP synthase subunit delta (186 aa).

Belongs to the ATPase delta chain family. In terms of assembly, F-type ATPases have 2 components, F(1) - the catalytic core - and F(0) - the membrane proton channel. F(1) has five subunits: alpha(3), beta(3), gamma(1), delta(1), epsilon(1). F(0) has three main subunits: a(1), b(2) and c(10-14). The alpha and beta chains form an alternating ring which encloses part of the gamma chain. F(1) is attached to F(0) by a central stalk formed by the gamma and epsilon chains, while a peripheral stalk is formed by the delta and b chains.

It localises to the cellular chromatophore membrane. Functionally, f(1)F(0) ATP synthase produces ATP from ADP in the presence of a proton or sodium gradient. F-type ATPases consist of two structural domains, F(1) containing the extramembraneous catalytic core and F(0) containing the membrane proton channel, linked together by a central stalk and a peripheral stalk. During catalysis, ATP synthesis in the catalytic domain of F(1) is coupled via a rotary mechanism of the central stalk subunits to proton translocation. Its function is as follows. This protein is part of the stalk that links CF(0) to CF(1). It either transmits conformational changes from CF(0) to CF(1) or is implicated in proton conduction. The chain is ATP synthase subunit delta from Rhodobacter capsulatus (Rhodopseudomonas capsulata).